The following is a 396-amino-acid chain: Deoxyguanosinetriphosphate triphosphohydrolase-like protein (396 aa).

One can recognise an HD domain in the interval 69–211 (RLSHSLEVSQ…AALADDIAYN (143 aa)).

This sequence belongs to the dGTPase family. Type 2 subfamily.

The chain is Deoxyguanosinetriphosphate triphosphohydrolase-like protein from Parvibaculum lavamentivorans (strain DS-1 / DSM 13023 / NCIMB 13966).